A 357-amino-acid chain; its full sequence is Homoserine kinase (357 aa).

Residue Lys-133 forms a Glycyl lysine isopeptide (Lys-Gly) (interchain with G-Cter in ubiquitin) linkage.

The protein belongs to the GHMP kinase family. Homoserine kinase subfamily. In terms of assembly, homodimer.

The enzyme catalyses L-homoserine + ATP = O-phospho-L-homoserine + ADP + H(+). It functions in the pathway amino-acid biosynthesis; L-threonine biosynthesis; L-threonine from L-aspartate: step 4/5. Commits homoserine to the threonine biosynthesis pathway by catalyzing its O-phosphorylation. This is Homoserine kinase (THR1) from Saccharomyces cerevisiae (strain ATCC 204508 / S288c) (Baker's yeast).